We begin with the raw amino-acid sequence, 512 residues long: MAVSRWKAVGSTLLAAFLVGLVVLIAVLLIRTYTLPTAVRKWNRNESLITELAEKERKQLVEALKGAIRIPTVSFSEEEQNTTALREFGEYIQKVFPQVFSSSLIQHEVLGGYSHLFKVQGSDHNLLPYMLLAHIDVVPAPPESWEVPPFSGEERDGYIYGRGTLDDKNCVIGILQSLEFLLKRGHKPRRSFYIGLGHDEEISGHKGAQKIVEKLQSQGVKLAFVLDEGLAVLDGVIQGISQPVALVGTTEKGSVTLDLTVNRLPGHSSMPPSETSIGILAAAVSRLEQNMMPNMFGNGPEQDMFEHLSTKFDFPLNIIMANLWLFSPILSRILELSPSTNAIVRTTTALTIFKAGIKSNVIPPTATATVNFRLHPAQTVQEVLDIVQNTIKDERVELSVLNSFDPLPVSPNDMSLGYHILQRTIHDVFSGPPVAPGVCVGNTDSRHFVNLTNSIYRFSPVVLKKEDVDRIHGLNERISKEAIELLVQFYIQLIQNSDTDNIPPPHLDTHEL.

A signal peptide spans 1-34 (MAVSRWKAVGSTLLAAFLVGLVVLIAVLLIRTYT). Asparagine 45 and asparagine 81 each carry an N-linked (GlcNAc...) asparagine glycan. Histidine 134 serves as a coordination point for Zn(2+). Aspartate 136 is a catalytic residue. A Zn(2+)-binding site is contributed by aspartate 166. The active-site Proton acceptor is glutamate 200. Zn(2+) contacts are provided by glutamate 201 and aspartate 227. N-linked (GlcNAc...) asparagine glycosylation is present at asparagine 450. Zn(2+) is bound at residue histidine 472.

Belongs to the peptidase M20A family.

It is found in the secreted. The catalysed reaction is an N-acyl-L-amino acid + H2O = an L-alpha-amino acid + a carboxylate. It carries out the reaction an N-acyl-aromatic L-alpha-amino acid + H2O = an aromatic L-alpha-amino acid + a carboxylate. The enzyme catalyses N-(5Z,8Z,11Z,14Z)-eicosatetraenoyl-glycine + H2O = (5Z,8Z,11Z,14Z)-eicosatetraenoate + glycine. It catalyses the reaction N-hexadecanoyl-L-phenylalanine + H2O = hexadecanoate + L-phenylalanine. The catalysed reaction is N-octadecanoyl-L-phenylalanine + H2O = octadecanoate + L-phenylalanine. It carries out the reaction N-(4Z,7Z,10Z,13Z,16Z,19Z-docosahexaenoyl)-L-phenylalanine + H2O = (4Z,7Z,10Z,13Z,16Z,19Z)-docosahexaenoate + L-phenylalanine. The enzyme catalyses N-(9Z-octadecenoyl)-L-asparagine + H2O = L-asparagine + (9Z)-octadecenoate. It catalyses the reaction (9Z)-octadecenoate + glycine = N-(9Z-octadecenoyl)glycine + H2O. The catalysed reaction is N-(9Z-octadecenoyl)-L-lysine + H2O = L-lysine + (9Z)-octadecenoate. It carries out the reaction N-(9Z-octadecenoyl)-L-methionine + H2O = (9Z)-octadecenoate + L-methionine. The enzyme catalyses N-(9Z-octadecenoyl)-L-serine + H2O = L-serine + (9Z)-octadecenoate. It catalyses the reaction N-(9Z-octadecenoyl)-L-tryptophan + H2O = L-tryptophan + (9Z)-octadecenoate. The catalysed reaction is N-(9Z-octadecenoyl)-L-tyrosine + H2O = L-tyrosine + (9Z)-octadecenoate. It carries out the reaction N-(9Z-octadecenoyl)-L-glutamine + H2O = L-glutamine + (9Z)-octadecenoate. The enzyme catalyses N-(5Z,8Z,11Z,14Z-eicosatetraenoyl)-L-serine + H2O = (5Z,8Z,11Z,14Z)-eicosatetraenoate + L-serine. It catalyses the reaction (5Z,8Z,11Z,14Z)-eicosatetraenoate + L-phenylalanine = N-(5Z,8Z,11Z,14Z-eicosatetraenoyl)-L-phenylalanine + H2O. The catalysed reaction is N-(9Z-octadecenoyl)-L-leucine + H2O = L-leucine + (9Z)-octadecenoate. It carries out the reaction L-phenylalanine + (9Z)-octadecenoate = N-(9Z-octadecenoyl)-L-phenylalanine + H2O. It participates in amino-acid metabolism. Its pathway is energy metabolism; electron transfer. The protein operates within lipid metabolism; fatty acid metabolism. With respect to regulation, lipoproteins are powerful coactivators of PM20D1 activity in vitro and NAA biosynthesis in vivo. Secreted enzyme that regulates the endogenous N-fatty acyl amino acid (NAAs) tissue and circulating levels by functioning as a bidirectional NAA synthase/hydrolase. It condenses free fatty acids and free amino acids to generate NAAs and bidirectionally catalyzes the reverse hydrolysis reaction. Some of these NAAs stimulate oxidative metabolism via mitochondrial uncoupling, increasing energy expenditure in a UPC1-independent manner. Thereby, this secreted protein may indirectly regulate whole body energy expenditure. PM20D1 circulates in tight association with both low- and high-density (LDL and HDL,respectively) lipoprotein particles. The sequence is that of N-fatty-acyl-amino acid synthase/hydrolase PM20D1 from Xenopus tropicalis (Western clawed frog).